The following is a 410-amino-acid chain: Multifunctional CCA protein (410 aa).

Positions 8 and 11 each coordinate ATP. CTP-binding residues include Gly-8 and Arg-11. The Mg(2+) site is built by Asp-21 and Asp-23. ATP is bound by residues Arg-91, Arg-138, and Arg-141. CTP-binding residues include Arg-91, Arg-138, and Arg-141. The HD domain occupies 229–347 (TGIHQEMVSD…AQLALVCEAD (119 aa)).

It belongs to the tRNA nucleotidyltransferase/poly(A) polymerase family. Bacterial CCA-adding enzyme type 1 subfamily. As to quaternary structure, monomer. Can also form homodimers and oligomers. It depends on Mg(2+) as a cofactor. Requires Ni(2+) as cofactor.

The enzyme catalyses a tRNA precursor + 2 CTP + ATP = a tRNA with a 3' CCA end + 3 diphosphate. It catalyses the reaction a tRNA with a 3' CCA end + 2 CTP + ATP = a tRNA with a 3' CCACCA end + 3 diphosphate. Its function is as follows. Catalyzes the addition and repair of the essential 3'-terminal CCA sequence in tRNAs without using a nucleic acid template. Adds these three nucleotides in the order of C, C, and A to the tRNA nucleotide-73, using CTP and ATP as substrates and producing inorganic pyrophosphate. tRNA 3'-terminal CCA addition is required both for tRNA processing and repair. Also involved in tRNA surveillance by mediating tandem CCA addition to generate a CCACCA at the 3' terminus of unstable tRNAs. While stable tRNAs receive only 3'-terminal CCA, unstable tRNAs are marked with CCACCA and rapidly degraded. This Xanthomonas euvesicatoria pv. vesicatoria (strain 85-10) (Xanthomonas campestris pv. vesicatoria) protein is Multifunctional CCA protein.